The chain runs to 350 residues: uncharacterized protein (350 aa).

Over residues lysine 197–serine 212 the composition is skewed to basic and acidic residues. The interval lysine 197–valine 217 is disordered.

Its subcellular location is the plastid. It is found in the chloroplast. This is an uncharacterized protein from Euglena gracilis.